A 157-amino-acid chain; its full sequence is Protein Smg (157 aa).

The protein belongs to the Smg family.

This Pectobacterium atrosepticum (strain SCRI 1043 / ATCC BAA-672) (Erwinia carotovora subsp. atroseptica) protein is Protein Smg.